Reading from the N-terminus, the 346-residue chain is Structure-specific endonuclease subunit SLX1 (346 aa).

Positions 10 to 92 (ALYCVYILRS…TNPHTSLHIP (83 aa)) constitute a GIY-YIG domain. The segment at 238–296 (CVVCKEEIDPEEGGLHAVCSNEGCEGVGHLRCWGRYLLKSEEGGGEGAILPVGGRCPRC) adopts an SLX1-type zinc-finger fold. The segment covering 324–336 (KVKRKRAPRKKTA) has biased composition (basic residues). The interval 324-346 (KVKRKRAPRKKTAKTKETREEDG) is disordered. A compositionally biased stretch (basic and acidic residues) spans 337-346 (KTKETREEDG).

The protein belongs to the SLX1 family. As to quaternary structure, forms a heterodimer with SLX4. Requires a divalent metal cation as cofactor.

The protein resides in the nucleus. Its function is as follows. Catalytic subunit of the SLX1-SLX4 structure-specific endonuclease that resolves DNA secondary structures generated during DNA repair and recombination. Has endonuclease activity towards branched DNA substrates, introducing single-strand cuts in duplex DNA close to junctions with ss-DNA. This Podospora anserina (strain S / ATCC MYA-4624 / DSM 980 / FGSC 10383) (Pleurage anserina) protein is Structure-specific endonuclease subunit SLX1.